The following is a 209-amino-acid chain: MDGVTVIDHPLVQHKLTIMRKKETSTAGFRRLLREISTLLCYEVTRDLELTMERIETPLQEIDAPILEGKKLVFASILRAGNGLLEGMLELVPSARVSHIGVYRDHETLQPVEYYFKAPDSLNERLVIVVDPMLATGNSSIAAIDKLKERGAKNIRFLCLLAAPEGIRNFHGVHPDVPIFTASIDSHLNEKGYIVPGLGDAGDRMYGTK.

5-phospho-alpha-D-ribose 1-diphosphate contacts are provided by residues R79, R104, and 131–139 (DPMLATGNS). Uracil is bound by residues I194 and 199-201 (GDA). D200 contacts 5-phospho-alpha-D-ribose 1-diphosphate.

The protein belongs to the UPRTase family. Mg(2+) serves as cofactor.

The catalysed reaction is UMP + diphosphate = 5-phospho-alpha-D-ribose 1-diphosphate + uracil. The protein operates within pyrimidine metabolism; UMP biosynthesis via salvage pathway; UMP from uracil: step 1/1. Its activity is regulated as follows. Allosterically activated by GTP. Functionally, catalyzes the conversion of uracil and 5-phospho-alpha-D-ribose 1-diphosphate (PRPP) to UMP and diphosphate. The sequence is that of Uracil phosphoribosyltransferase from Sinorhizobium fredii (strain NBRC 101917 / NGR234).